We begin with the raw amino-acid sequence, 232 residues long: Orotidine 5'-phosphate decarboxylase (232 aa).

Residues Asp-13, Lys-35, 62-71 (DLKFHDIPNT), Thr-121, Arg-182, Gln-191, Gly-211, and Arg-212 each bind substrate. The Proton donor role is filled by Lys-64.

It belongs to the OMP decarboxylase family. Type 1 subfamily. Homodimer.

It carries out the reaction orotidine 5'-phosphate + H(+) = UMP + CO2. It participates in pyrimidine metabolism; UMP biosynthesis via de novo pathway; UMP from orotate: step 2/2. Catalyzes the decarboxylation of orotidine 5'-monophosphate (OMP) to uridine 5'-monophosphate (UMP). The chain is Orotidine 5'-phosphate decarboxylase from Teredinibacter turnerae (strain ATCC 39867 / T7901).